The primary structure comprises 224 residues: ATP phosphoribosyltransferase (224 aa).

This sequence belongs to the ATP phosphoribosyltransferase family. Short subfamily. In terms of assembly, heteromultimer composed of HisG and HisZ subunits.

It localises to the cytoplasm. It carries out the reaction 1-(5-phospho-beta-D-ribosyl)-ATP + diphosphate = 5-phospho-alpha-D-ribose 1-diphosphate + ATP. It participates in amino-acid biosynthesis; L-histidine biosynthesis; L-histidine from 5-phospho-alpha-D-ribose 1-diphosphate: step 1/9. Catalyzes the condensation of ATP and 5-phosphoribose 1-diphosphate to form N'-(5'-phosphoribosyl)-ATP (PR-ATP). Has a crucial role in the pathway because the rate of histidine biosynthesis seems to be controlled primarily by regulation of HisG enzymatic activity. The protein is ATP phosphoribosyltransferase of Cupriavidus pinatubonensis (strain JMP 134 / LMG 1197) (Cupriavidus necator (strain JMP 134)).